Here is a 2272-residue protein sequence, read N- to C-terminus: MARFGEAVVVGRPGSGDGDSDQSRNRQGTPVPASGPAAAYKQSKAQRARTMALYNPIPVRQNCFTVNRSLFIFGEDNIVRKYAKKLIDWPPFEYMILATIIANCIVLALEQHLPEDDKTPMSRRLEKTEPYFIGIFCFEAGIKIVALGFIFHKGSYLRNGWNVMDFIVVLSGILATAGTHFNTHVDLRALRAVRVLRPLKLVSGIPSLQIVLKSIMKAMVPLLQIGLLLFFAILMFAIIGLEFYSGKLHRACFMNNSGILEGFDPPHPCGVQGCPAGYECKDWIGPNDGITQFDNILFAVLTVFQCITMEGWTTVLYNTNDALGATWNWLYFIPLIIIGSFFVLNLVLGVLSGEFAKERERVENRRAFMKLRRQQQIERELNGYRAWIDKAEEVMLAEENKNSGTSALEVLRRATIKRSRTEAMTRDSSDEHCVDISSVGTPLARASIKSTKVDGASYFRHKERLLRISIRHMVKSQVFYWIVLSVVALNTACVAIVHHNQPQWLTHLLYYAEFLFLGLFLLEMSLKMYGMGPRLYFHSSFNCFDFGVTVGSIFEVVWAIFRPGTSFGISVLRALRLLRIFKITKYWASLRNLVVSLMSSMKSIISLLFLLFLFIVVFALLGMQLFGGRFNFNDGTPSANFDTFPAAIMTVFQILTGEDWNEVMYNGIRSQGGVSSGMWSAIYFIVLTLFGNYTLLNVFLAIAVDNLANAQELTKDEQEEEEAFNQKHALQKAKEVSPMSAPNMPSIERDRRRRHHMSMWEPRSSHLRERRRRHHMSVWEQRTSQLRRHMQMSSQEALNKEEAPPMNPLNPLNPLSPLNPLNAHPSLYRRPRPIEGLALGLGLEKCEEERISRGGSLKGDIGGLTSALDNQRSPLSLGKREPPWLPRSCHGNCDPIQQEAGGGETVVTFEDRARHRQSQRRSRHRRVRTEGKDSASASRSRSASQERSLDEGVSVEGEKEHEPHSSHRSKEPTIHEEERTQDLRRTNSLMVPRGSGLVGALDEAETPLVQPQPELEVGKDAALTEQEAEGSSEQALLGDVQLDVGRGISQSEPDLSCMTANMDKATTESTSVTVAIPDVDPLVDSTVVNISNKTDGEASPLKEAETKEEEEEVEKKKKQKKEKRETGKAMVPHSSMFIFSTTNPIRRACHYIVNLRYFEMCILLVIAASSIALAAEDPVLTNSERNKVLRYFDYVFTGVFTFEMVIKMIDQGLILQDGSYFRDLWNILDFVVVVGALVAFALANALGTNKGRDIKTIKSLRVLRVLRPLKTIKRLPKLKAVFDCVVTSLKNVFNILIVYKLFMFIFAVIAVQLFKGKFFYCTDSSKDTEKECIGNYVDHEKNKMEVKGREWKRHEFHYDNIIWALLTLFTVSTGEGWPQVLQHSVDVTEEDRGPSRSNRMEMSIFYVVYFVVFPFFFVNIFVALIIITFQEQGDKMMEECSLEKNERACIDFAISAKPLTRYMPQNRHTFQYRVWHFVVSPSFEYTIMAMIALNTVVLMMKYYTAPCTYELALKYLNIAFTMVFSLECVLKVIAFGFLNYFRDTWNIFDFITVIGSITEIILTDSKLVNTSGFNMSFLKLFRAARLIKLLRQGYTIRILLWTFVQSFKALPYVCLLIAMLFFIYAIIGMQVFGNIKLDEESHINRHNNFRSFFGSLMLLFRSATGEAWQEIMLSCLGEKGCEPDTTAPSGQNESERCGTDLAYVYFVSFIFFCSFLMLNLFVAVIMDNFEYLTRDSSILGPHHLDEFVRVWAEYDRAACGRIHYTEMYEMLTLMSPPLGLGKRCPSKVAYKRLVLMNMPVAEDMTVHFTSTLMALIRTALDIKIAKGGADRQQLDSELQKETLAIWPHLSQKMLDLLVPMPKASDLTVGKIYAAMMIMDYYKQSKVKKQRQQLEEQKNAPMFQRMEPSSLPQEIIANAKALPYLQQDPVSGLSGRSGYPSMSPLSPQEIFQLACMDPADDGQFQEQQSLVVTDPSSMRRSFSTIRDKRSNSSWLEEFSMERSSENTYKSRRRSYHSSLRLSAHRLNSDSGHKSDTHRSGGRERGRSKERKHLLSPDVSRCNSEERGTQADWESPERRQSRSPSEGRSQTPNRQGTGSLSESSIPSISDTSTPRRSRRQLPPVPPKPRPLLSYSSLMRHTGGISPPPDGSEGGSPLASQALESNSACLTESSNSLHPQQGQHPSPQHYISEPYLALHEDSHASDCGEEETLTFEAAVATSLGRSNTIGSAPPLRHSWQMPNGHYRRRRWGAWAGMMCGAVSDLLSDTEEDDKC.

Residues 1 to 40 (MARFGEAVVVGRPGSGDGDSDQSRNRQGTPVPASGPAAAY) are disordered. At 1-90 (MARFGEAVVV…KYAKKLIDWP (90 aa)) the chain is on the cytoplasmic side. Residues S15 and S20 each carry the phosphoserine modification. The I repeat unit spans residues 77-355 (NIVRKYAKKL…LVLGVLSGEF (279 aa)). The chain crosses the membrane as a helical span at residues 91 to 109 (PFEYMILATIIANCIVLAL). The Extracellular portion of the chain corresponds to 110–128 (EQHLPEDDKTPMSRRLEKT). Residues 129-147 (EPYFIGIFCFEAGIKIVAL) traverse the membrane as a helical segment. Residues 148 to 159 (GFIFHKGSYLRN) lie on the Cytoplasmic side of the membrane. Residues 160–174 (GWNVMDFIVVLSGIL) form a helical membrane-spanning segment. Residues 175–186 (ATAGTHFNTHVD) lie on the Extracellular side of the membrane. The chain crosses the membrane as a helical span at residues 187–206 (LRALRAVRVLRPLKLVSGIP). Residues 207–224 (SLQIVLKSIMKAMVPLLQ) are Cytoplasmic-facing. Residues 225-245 (IGLLLFFAILMFAIIGLEFYS) traverse the membrane as a helical segment. Topologically, residues 246–327 (GKLHRACFMN…NTNDALGATW (82 aa)) are extracellular. Residue N255 is glycosylated (N-linked (GlcNAc...) asparagine). A helical transmembrane segment spans residues 328–351 (NWLYFIPLIIIGSFFVLNLVLGVL). Topologically, residues 352–477 (SGEFAKERER…ISIRHMVKSQ (126 aa)) are cytoplasmic. Positions 375 to 392 (QQIERELNGYRAWIDKAE) are binding to the beta subunit. Position 427 (D427) interacts with Ca(2+). Residue S428 is modified to Phosphoserine. S429, E431, C433, and S438 together coordinate Ca(2+). Phosphothreonine is present on T441. An II repeat occupies 463-707 (ERLLRISIRH…VFLAIAVDNL (245 aa)). The chain crosses the membrane as a helical span at residues 478–497 (VFYWIVLSVVALNTACVAIV). The Extracellular segment spans residues 498 to 510 (HHNQPQWLTHLLY). A helical transmembrane segment spans residues 511–530 (YAEFLFLGLFLLEMSLKMYG). At 531-539 (MGPRLYFHS) the chain is on the cytoplasmic side. The helical transmembrane segment at 540–558 (SFNCFDFGVTVGSIFEVVW) threads the bilayer. Residues 559–568 (AIFRPGTSFG) lie on the Extracellular side of the membrane. A helical transmembrane segment spans residues 569–587 (ISVLRALRLLRIFKITKYW). Residues 588–606 (ASLRNLVVSLMSSMKSIIS) are Cytoplasmic-facing. A helical transmembrane segment spans residues 607-626 (LLFLLFLFIVVFALLGMQLF). At 627–679 (GGRFNFNDGTPSANFDTFPAAIMTVFQILTGEDWNEVMYNGIRSQGGVSSGMW) the chain is on the extracellular side. Residues 680–704 (SAIYFIVLTLFGNYTLLNVFLAIAV) form a helical membrane-spanning segment. Over 705-1150 (DNLANAQELT…TTNPIRRACH (446 aa)) the chain is Cytoplasmic. The interval 730-777 (LQKAKEVSPMSAPNMPSIERDRRRRHHMSMWEPRSSHLRERRRRHHMS) is disordered. Residues S737, S746, S794, S816, and S856 each carry the phosphoserine modification. 2 disordered regions span residues 854 to 994 (GGSL…VPRG) and 1091 to 1127 (SNKT…RETG). Over residues 914–927 (RHRQSQRRSRHRRV) the composition is skewed to basic residues. Over residues 934–946 (SASASRSRSASQE) the composition is skewed to low complexity. S948 carries the phosphoserine modification. 2 stretches are compositionally biased toward basic and acidic residues: residues 956 to 985 (EGEK…DLRR) and 1094 to 1105 (TDGEASPLKEAE). S1099 carries the post-translational modification Phosphoserine. An III repeat occupies 1143–1429 (NPIRRACHYI…IFVALIIITF (287 aa)). The helical transmembrane segment at 1151–1167 (YIVNLRYFEMCILLVIA) threads the bilayer. Over 1168–1191 (ASSIALAAEDPVLTNSERNKVLRY) the chain is Extracellular. A helical transmembrane segment spans residues 1192-1211 (FDYVFTGVFTFEMVIKMIDQ). The Cytoplasmic segment spans residues 1212–1219 (GLILQDGS). The chain crosses the membrane as a helical span at residues 1220–1242 (YFRDLWNILDFVVVVGALVAFAL). Over 1243 to 1256 (ANALGTNKGRDIKT) the chain is Extracellular. A helical transmembrane segment spans residues 1257–1274 (IKSLRVLRVLRPLKTIKR). Over 1275–1293 (LPKLKAVFDCVVTSLKNVF) the chain is Cytoplasmic. A helical membrane pass occupies residues 1294 to 1313 (NILIVYKLFMFIFAVIAVQL). Topologically, residues 1314-1400 (FKGKFFYCTD…DRGPSRSNRM (87 aa)) are extracellular. Residues 1401-1424 (EMSIFYVVYFVVFPFFFVNIFVAL) form a helical membrane-spanning segment. Residues 1425–1481 (IIITFQEQGDKMMEECSLEKNERACIDFAISAKPLTRYMPQNRHTFQYRVWHFVVSP) are Cytoplasmic-facing. An IV repeat occupies 1466–1729 (NRHTFQYRVW…LFVAVIMDNF (264 aa)). A helical transmembrane segment spans residues 1482-1500 (SFEYTIMAMIALNTVVLMM). Residues 1501 to 1515 (KYYTAPCTYELALKY) lie on the Extracellular side of the membrane. The helical transmembrane segment at 1516–1535 (LNIAFTMVFSLECVLKVIAF) threads the bilayer. At 1536–1543 (GFLNYFRD) the chain is on the cytoplasmic side. Residues 1544-1562 (TWNIFDFITVIGSITEIIL) form a helical membrane-spanning segment. At 1563–1573 (TDSKLVNTSGF) the chain is on the extracellular side. N1569 is a glycosylation site (N-linked (GlcNAc...) asparagine). The helical transmembrane segment at 1574 to 1592 (NMSFLKLFRAARLIKLLRQ) threads the bilayer. Residues 1593-1611 (GYTIRILLWTFVQSFKALP) lie on the Cytoplasmic side of the membrane. Residues 1612–1631 (YVCLLIAMLFFIYAIIGMQV) traverse the membrane as a helical segment. The Extracellular portion of the chain corresponds to 1632-1700 (FGNIKLDEES…QNESERCGTD (69 aa)). N1692 carries N-linked (GlcNAc...) asparagine glycosylation. Residues 1701 to 1726 (LAYVYFVSFIFFCSFLMLNLFVAVIM) form a helical membrane-spanning segment. Residues 1727–2272 (DNFEYLTRDS…LSDTEEDDKC (546 aa)) lie on the Cytoplasmic side of the membrane. The 36-residue stretch at 1742 to 1777 (HHLDEFVRVWAEYDRAACGRIHYTEMYEMLTLMSPP) folds into the EF-hand domain. 3 residues coordinate Ca(2+): D1755, R1761, and E1766. Residues 2021 to 2186 (SAHRLNSDSG…QQGQHPSPQH (166 aa)) form a disordered region. Positions 2025–2045 (LNSDSGHKSDTHRSGGRERGR) are enriched in basic and acidic residues. Residues S2054 and S2073 each carry the phosphoserine modification. A compositionally biased stretch (basic and acidic residues) spans 2061–2078 (NSEERGTQADWESPERRQ). Low complexity predominate over residues 2097-2112 (SLSESSIPSISDTSTP). The span at 2155-2174 (LASQALESNSACLTESSNSL) shows a compositional bias: polar residues. The segment covering 2175–2186 (HPQQGQHPSPQH) has biased composition (low complexity).

It belongs to the calcium channel alpha-1 subunit (TC 1.A.1.11) family. CACNA1E subfamily. In terms of assembly, interacts with EFHC1. Voltage-dependent calcium channels are multisubunit complexes, consisting of alpha-1, alpha-2, beta and delta subunits in a 1:1:1:1 ratio. The channel activity is directed by the pore-forming and voltage-sensitive alpha-1 subunit. In many cases, this subunit is sufficient to generate voltage-sensitive calcium channel activity. The auxiliary subunits beta and alpha-2/delta linked by a disulfide bridge regulate the channel activity. In terms of tissue distribution, expressed in neuronal tissues, retina, spleen, and pancreatic islet cells.

The protein resides in the membrane. It carries out the reaction Ca(2+)(in) = Ca(2+)(out). Functionally, voltage-sensitive calcium channels (VSCC) mediate the entry of calcium ions into excitable cells and are also involved in a variety of calcium-dependent processes, including muscle contraction, hormone or neurotransmitter release, gene expression, cell motility, cell division and cell death. The isoform alpha-1E gives rise to R-type calcium currents. R-type calcium channels belong to the 'high-voltage activated' (HVA) group and are blocked by nickel. They are however insensitive to dihydropyridines (DHP). Calcium channels containing alpha-1E subunit could be involved in the modulation of firing patterns of neurons which is important for information processing. This is Voltage-dependent R-type calcium channel subunit alpha-1E (Cacna1e) from Mus musculus (Mouse).